We begin with the raw amino-acid sequence, 321 residues long: MSRYSRIAGTGGYLPRQVVTNDDLAMRVETSDEWIVERTGIRRRHIAAADETASSMAEIASRQALEAAAIDPHDLDLIILATSSPDRVFPSTACLLQQRLGVRSCAAFDVQAACSGFIFALSIADQYISAGNANRVLVVGTEVNSRSVDWDDRSTCILFGDGAGAVVLESATEPGIMSTHIHSDGHYQDLLYLPNPASNGEGSDESRTIRMQGSEVFKVAVNTLGRIVDETLEQNGLQKSDVDWLVPHQANIRIIAATAKKLQLPMERVVVTVDEQGNTSSASIPLAFDEAVRDGRIKRGQTVLMEAFGGGFAWGSALLRY.

Residues C114 and H248 contribute to the active site. The tract at residues 249–253 (QANIR) is ACP-binding. N278 is a catalytic residue.

It belongs to the thiolase-like superfamily. FabH family. In terms of assembly, homodimer.

It is found in the cytoplasm. The enzyme catalyses malonyl-[ACP] + acetyl-CoA + H(+) = 3-oxobutanoyl-[ACP] + CO2 + CoA. The protein operates within lipid metabolism; fatty acid biosynthesis. Catalyzes the condensation reaction of fatty acid synthesis by the addition to an acyl acceptor of two carbons from malonyl-ACP. Catalyzes the first condensation reaction which initiates fatty acid synthesis and may therefore play a role in governing the total rate of fatty acid production. Possesses both acetoacetyl-ACP synthase and acetyl transacylase activities. Its substrate specificity determines the biosynthesis of branched-chain and/or straight-chain of fatty acids. In Methylococcus capsulatus (strain ATCC 33009 / NCIMB 11132 / Bath), this protein is Beta-ketoacyl-[acyl-carrier-protein] synthase III.